A 251-amino-acid polypeptide reads, in one-letter code: tRNA1(Val) (adenine(37)-N6)-methyltransferase (251 aa).

It belongs to the methyltransferase superfamily. tRNA (adenine-N(6)-)-methyltransferase family.

It is found in the cytoplasm. It catalyses the reaction adenosine(37) in tRNA1(Val) + S-adenosyl-L-methionine = N(6)-methyladenosine(37) in tRNA1(Val) + S-adenosyl-L-homocysteine + H(+). In terms of biological role, specifically methylates the adenine in position 37 of tRNA(1)(Val) (anticodon cmo5UAC). The chain is tRNA1(Val) (adenine(37)-N6)-methyltransferase from Yersinia enterocolitica serotype O:8 / biotype 1B (strain NCTC 13174 / 8081).